The primary structure comprises 233 residues: Merozoite surface protein 1 (233 aa).

The signal sequence occupies residues 1–19 (MKIIFFLCSFLFFIINTQC). Over residues 58-67 (SGTAVTTSTP) the composition is skewed to polar residues. Residues 58–110 (SGTAVTTSTPGSKGSVASGGSGGSVASGGSVASGGSGNSRRTNPSDNSSDSDA) form a disordered region. Gly residues predominate over residues 74–94 (ASGGSGGSVASGGSVASGGSG). Positions 95 to 107 (NSRRTNPSDNSSD) are enriched in polar residues. An N-linked (GlcNAc...) asparagine glycan is attached at Asn104.

In terms of assembly, forms a complex composed of subunits p83, p30, p38, and p42 which remain non-covalently associated; the complex is formed at the merozoite surface prior to egress from host erythrocytes. Forms a complex composed of processed MSP1 subunits, MSP6 subunit p36 and MSP7; the complex is formed at the merozoite surface prior to egress from host erythrocytes. Within the complex, interacts (via subunit p38) with MSP6 subunit p36 and (via subunits p83, p30 and p38) with MSP7 (via subunit p22). Forms a complex composed of MSP1, MSP6, DBLMSP1 and DBLMSP2. Within the complex, interacts (via subunit p38) with DBLMSP1 and DBLMSP2. Forms a complex composed of MSP1, and rhoptry proteins RhopH3, RAP1 and CLAG9/RhopH3. Within the complex, interacts (via subunits p42 and p19) with RhopH3 (via C-terminus). Forms a complex composed of MSP1, MSP6, MSP7, MSP9 and MSP3; within the complex, MSP6 and MSP9 mediate the binding to the host erythrocyte. Interacts (via subunits p19 and p42) with MSP9; the interaction is direct; MSP1 subunits p19 or p42, and MSP9 form a co-ligand complex that interacts with host SLC4A1/Band 3 protein. May interact with PFD6. Interacts with host spectrin. The p190 precursor is cleaved by SUB1 prior to merozoite egress into 4 subunits p83, p30, p38, and p42 which remain non-covalently associated. SUB1-mediated proteolytic cleavage occurs in an orderly manner; the first cleavage occurs at the p83/p30 site, followed by cleavage at the p30/p38 site, the last cleavage occurs at the p38/p42 site. The order of cleavage is essential for parasite viability. SUB1-mediated processing is essential for merozoite egress. In a second processing step during erythrocyte invasion, p42 is cleaved by SUB2 into p33 and p19; the latter remains attached to the merozoite surface via its GPI-anchor and stays on the surface during the subsequent ring stage.

It is found in the cell membrane. The protein localises to the secreted. Its function is as follows. During the asexual blood stage, involved in merozoite egress from host erythrocytes possibly via its interaction with the host cytoskeleton protein spectrin resulting in the destabilization of the host cytoskeleton and thus leading to erythrocyte cell membrane rupture. Involved in the binding to host erythrocytes and is required for host erythrocyte invasion. The chain is Merozoite surface protein 1 from Plasmodium falciparum (isolate CDC / Honduras).